Here is an 85-residue protein sequence, read N- to C-terminus: Large ribosomal subunit protein bL27 (85 aa).

The tract at residues 1–21 (MAHKKGGGSTKNGRDSNPKYL) is disordered.

Belongs to the bacterial ribosomal protein bL27 family.

The polypeptide is Large ribosomal subunit protein bL27 (Chlorobium chlorochromatii (strain CaD3)).